Consider the following 274-residue polypeptide: Envelope glycoprotein L (274 aa).

The signal sequence occupies residues 1 to 21 (MMPLLLLILLSTRNLLGAAQS). Residues 51 to 251 (VEHKCREALA…RSYRDRFPAV (201 aa)) enclose the gL betaherpesvirus-type domain. Cys-156 and Cys-161 form a disulfide bridge.

This sequence belongs to the herpesviridae glycoprotein L (gL) family. Betaherpesvirinae gL subfamily. In terms of assembly, interacts with glycoprotein H (gH); this interaction is necessary for the correct processing and cell surface expression of gH.

Its subcellular location is the virion membrane. The protein localises to the host cell membrane. It is found in the host Golgi apparatus. It localises to the host trans-Golgi network. In terms of biological role, the heterodimer glycoprotein H-glycoprotein L is required for the fusion of viral and plasma membranes leading to virus entry into the host cell. Acts as a functional inhibitor of gH and maintains gH in an inhibited form. Upon binding to host integrins, gL dissociates from gH leading to activation of the viral fusion glycoproteins gB and gH. The protein is Envelope glycoprotein L of Murid herpesvirus 1 (strain Smith) (MuHV-1).